Reading from the N-terminus, the 425-residue chain is Perilipin-2 (425 aa).

N-acetylalanine is present on alanine 2. The residue at position 213 (serine 213) is a Phosphoserine. Tyrosine 230 is modified (phosphotyrosine).

The protein belongs to the perilipin family. As to quaternary structure, interacts with IRGC. Post-translationally, acylated; primarily with C14, C16 and C18 fatty acids. In terms of processing, phosphorylation at Tyr-230 by isoform 1 of CHKA (CHKalpha2) promotes dissociation from lipid droplets: dissociation is followed by recruitment of autophagosome machinery to lipid droplets and subsequent lipid droplet lipolysis. Polyubiquitination of Nt-acetylatable A-PLIN2 by MARCHF6 lead to degradation by 26S proteasomes. As to expression, adipose tissue specific. Expressed abundantly and preferentially in fat pads.

It is found in the membrane. The protein localises to the lipid droplet. Functionally, structural component of lipid droplets, which is required for the formation and maintenance of lipid storage droplets. The protein is Perilipin-2 of Mus musculus (Mouse).